The following is an 85-amino-acid chain: Small ribosomal subunit protein uS17 (85 aa).

It belongs to the universal ribosomal protein uS17 family. In terms of assembly, part of the 30S ribosomal subunit.

In terms of biological role, one of the primary rRNA binding proteins, it binds specifically to the 5'-end of 16S ribosomal RNA. The sequence is that of Small ribosomal subunit protein uS17 from Pseudoalteromonas translucida (strain TAC 125).